The sequence spans 277 residues: Large ribosomal subunit protein uL2 (277 aa).

Basic residues-rich tracts occupy residues Arg-210 to Gln-219 and Thr-259 to Lys-277. The disordered stretch occupies residues Arg-210–Lys-277.

Belongs to the universal ribosomal protein uL2 family. As to quaternary structure, part of the 50S ribosomal subunit. Forms a bridge to the 30S subunit in the 70S ribosome.

Functionally, one of the primary rRNA binding proteins. Required for association of the 30S and 50S subunits to form the 70S ribosome, for tRNA binding and peptide bond formation. It has been suggested to have peptidyltransferase activity; this is somewhat controversial. Makes several contacts with the 16S rRNA in the 70S ribosome. The chain is Large ribosomal subunit protein uL2 from Ligilactobacillus salivarius (strain UCC118) (Lactobacillus salivarius).